The sequence spans 454 residues: Allantoinase (454 aa).

Residues His59, His61, Lys150, His190, His246, and Asp319 each coordinate Zn(2+). An N6-carboxylysine modification is found at Lys150.

This sequence belongs to the metallo-dependent hydrolases superfamily. Allantoinase family. As to quaternary structure, homotetramer. It depends on Zn(2+) as a cofactor. Post-translationally, carboxylation allows a single lysine to coordinate two zinc ions.

It catalyses the reaction (S)-allantoin + H2O = allantoate + H(+). It participates in nitrogen metabolism; (S)-allantoin degradation; allantoate from (S)-allantoin: step 1/1. Catalyzes the conversion of allantoin (5-ureidohydantoin) to allantoic acid by hydrolytic cleavage of the five-member hydantoin ring. This chain is Allantoinase, found in Bacillus licheniformis (strain ATCC 14580 / DSM 13 / JCM 2505 / CCUG 7422 / NBRC 12200 / NCIMB 9375 / NCTC 10341 / NRRL NRS-1264 / Gibson 46).